Consider the following 438-residue polypeptide: Ubiquitin carboxyl-terminal hydrolase 27 (438 aa).

Positions 78 to 421 (RGLINLGNTC…EGYLLFYHKQ (344 aa)) constitute a USP domain. C87 (nucleophile) is an active-site residue. Residue H380 is the Proton acceptor of the active site.

This sequence belongs to the peptidase C19 family. Interacts with phosphorylated BCL2L11 isoform BIMEL; this interaction leads to BCL2L11 deubiquitination and stabilization.

Its subcellular location is the cytoplasm. The protein resides in the cytosol. The protein localises to the nucleus. The enzyme catalyses Thiol-dependent hydrolysis of ester, thioester, amide, peptide and isopeptide bonds formed by the C-terminal Gly of ubiquitin (a 76-residue protein attached to proteins as an intracellular targeting signal).. Deubiquitinase involved in innate antiviral immunity by mediating deubiquitination of CGAS and RIGI. Negatively regulates RIGI by mediating 'Lys-63'-linked deubiquitination of RIGI, inhibiting type I interferon signaling. Also regulates 'Lys-63'-linked ubiquitination level of MDA5/IFIH1. Acts as a positive regulator of the cGAS-STING pathway by catalyzing 'Lys-48'-linked deubiquitination of CGAS, thereby promoting its stabilization. Can reduce the levels of BCL2L11/BIM ubiquitination and stabilize BCL2L11 in response to the RAF-MAPK-degradation signal. By acting on BCL2L11 levels, may counteract the anti-apoptotic effects of MAPK activity. The polypeptide is Ubiquitin carboxyl-terminal hydrolase 27 (Homo sapiens (Human)).